The following is a 456-amino-acid chain: Bifunctional protein GlmU (456 aa).

The segment at 1-229 is pyrophosphorylase; sequence MSNSSMSVVI…LSEVEGVNNR (229 aa). UDP-N-acetyl-alpha-D-glucosamine contacts are provided by residues 11–14, lysine 25, glutamine 76, 81–82, 103–105, glycine 140, glutamate 154, asparagine 169, and asparagine 227; these read LAAG, GT, and YGD. Aspartate 105 serves as a coordination point for Mg(2+). A Mg(2+)-binding site is contributed by asparagine 227. The segment at 230–250 is linker; sequence LQLAALERVYQSEQAEKLLLA. An N-acetyltransferase region spans residues 251 to 456; the sequence is GVMLLDPARF…QGWQRPIKKK (206 aa). UDP-N-acetyl-alpha-D-glucosamine-binding residues include arginine 333 and lysine 351. The active-site Proton acceptor is histidine 363. UDP-N-acetyl-alpha-D-glucosamine contacts are provided by tyrosine 366 and asparagine 377. Acetyl-CoA contacts are provided by residues alanine 380, 386 to 387, serine 405, alanine 423, and arginine 440; that span reads NY.

This sequence in the N-terminal section; belongs to the N-acetylglucosamine-1-phosphate uridyltransferase family. In the C-terminal section; belongs to the transferase hexapeptide repeat family. As to quaternary structure, homotrimer. Mg(2+) serves as cofactor.

It is found in the cytoplasm. The enzyme catalyses alpha-D-glucosamine 1-phosphate + acetyl-CoA = N-acetyl-alpha-D-glucosamine 1-phosphate + CoA + H(+). It catalyses the reaction N-acetyl-alpha-D-glucosamine 1-phosphate + UTP + H(+) = UDP-N-acetyl-alpha-D-glucosamine + diphosphate. Its pathway is nucleotide-sugar biosynthesis; UDP-N-acetyl-alpha-D-glucosamine biosynthesis; N-acetyl-alpha-D-glucosamine 1-phosphate from alpha-D-glucosamine 6-phosphate (route II): step 2/2. It functions in the pathway nucleotide-sugar biosynthesis; UDP-N-acetyl-alpha-D-glucosamine biosynthesis; UDP-N-acetyl-alpha-D-glucosamine from N-acetyl-alpha-D-glucosamine 1-phosphate: step 1/1. It participates in bacterial outer membrane biogenesis; LPS lipid A biosynthesis. Catalyzes the last two sequential reactions in the de novo biosynthetic pathway for UDP-N-acetylglucosamine (UDP-GlcNAc). The C-terminal domain catalyzes the transfer of acetyl group from acetyl coenzyme A to glucosamine-1-phosphate (GlcN-1-P) to produce N-acetylglucosamine-1-phosphate (GlcNAc-1-P), which is converted into UDP-GlcNAc by the transfer of uridine 5-monophosphate (from uridine 5-triphosphate), a reaction catalyzed by the N-terminal domain. This Yersinia enterocolitica serotype O:8 / biotype 1B (strain NCTC 13174 / 8081) protein is Bifunctional protein GlmU.